A 171-amino-acid polypeptide reads, in one-letter code: Transcription elongation factor GreB (171 aa).

Positions 53 to 75 form a coiled coil; it reads KKRLREIDRRVRFLAKRLEVLKI.

Belongs to the GreA/GreB family. GreB subfamily.

Necessary for efficient RNA polymerase transcription elongation past template-encoded arresting sites. The arresting sites in DNA have the property of trapping a certain fraction of elongating RNA polymerases that pass through, resulting in locked ternary complexes. Cleavage of the nascent transcript by cleavage factors such as GreA or GreB allows the resumption of elongation from the new 3'terminus. GreB releases sequences of up to 9 nucleotides in length. The sequence is that of Transcription elongation factor GreB from Yersinia pestis.